We begin with the raw amino-acid sequence, 408 residues long: Putative gustatory receptor 58b (408 aa).

Topologically, residues 1-44 are cytoplasmic; that stretch reads MLHPKLGRVMNVVYYHSVVFALMSTTLRIRSCRKCLRLEKVSRT. A helical transmembrane segment spans residues 45–65; it reads YTIYSFFVGIFLFLNLYFMVP. Residues 66–82 are Extracellular-facing; it reads RIMEDGYMKYNIVLQWN. Residues 83 to 103 form a helical membrane-spanning segment; the sequence is FFVMLFLRAIAVVSCYGTLWL. At 104-150 the chain is on the cytoplasmic side; sequence KRHKIIQLYKYSLIYWKRFGHITRAIVDKKELLDLQESLARIMIRKI. The chain crosses the membrane as a helical span at residues 151-171; sequence ILLYSAFLCSTVLQYQLLSVI. Over 172 to 193 the chain is Extracellular; the sequence is NPQIFLAFCARLTHFLHFLCVK. A helical transmembrane segment spans residues 194–214; sequence MGFFGVLVLLNHQFLVIHLAI. Topologically, residues 215–245 are cytoplasmic; sequence NALHGRKARKKWKALRSVAAMHLKTLRLARR. Residues 246 to 266 form a helical membrane-spanning segment; the sequence is IFDMFDIANATVFINMFMTAI. Topologically, residues 267–284 are extracellular; the sequence is NILYHAVQYSNSSIKSNG. Asn277 is a glycosylation site (N-linked (GlcNAc...) asparagine). A helical membrane pass occupies residues 285-305; that stretch reads WGILFGNGLIVFNFWGTMALM. At 306 to 364 the chain is on the cytoplasmic side; that stretch reads EMLDSVVTSCNNTGQQLRQLSDLPKVGPKMQRELDVFTMQLRQNRLVYKICGIVELDKP. Residues 365–385 form a helical membrane-spanning segment; it reads ACLSYIGSILSNVIILMQFDL. Over 386-408 the chain is Extracellular; the sequence is RRQRQPINDRQYLIHLMKNKTKV. Asn404 carries N-linked (GlcNAc...) asparagine glycosylation.

This sequence belongs to the insect chemoreceptor superfamily. Gustatory receptor (GR) family. Gr22e subfamily. Expressed in the adult labellar chemosensory neurons, labral sense organ and thorax. In larvae, is in neurons of the terminal external chemosensory organ as well as in the dorsal pharyngeal sense organ.

It localises to the cell membrane. Its function is as follows. Probable gustatory receptor which mediates acceptance or avoidance behavior, depending on its substrates. The sequence is that of Putative gustatory receptor 58b (Gr58b) from Drosophila melanogaster (Fruit fly).